The sequence spans 545 residues: MAAKEIKFGRTAREKMLRGVDILADAVKVTLGPKGRNVIIDKSFGAPRITKDGVSVAKEIELEDKFENMGAQMVREVASKTNDIAGDGTTTATVLAQAIVREGAKAVAAGMNPMDLKRGIDLAVAEVVKDLQAKAKKINTSEEVAQVGTISANGERQVGLDIAEAMQKVGNEGVITVEEAKTAETELEVVEGMQFDRGYLSPYFVTNPEKMIADLEDVFILLHEKKLSNLQSMLPVLEAVVQTGKPLLIIAEDVEGEALATLVVNKLRGGLKIAAVKAPGFGDRRKAMLEDIAILTGGTVISEDLGIKLESVTLDMLGRAKKVSISKENTTIVDGSGAKSDIEGRVAQIKAQIEETTSDYDREKLQERLAKLAGGVAVIRVGGSTEVEVKEKKDRIDDALNATRAAVQEGIVPGGGVALLRSSVKISAKGVNDDQEAGINIVRRALQAPARQIAENAGDEASIVVGKILDKDQDNYGYNAQTGEYGDMIGMGIIDPVKVVRTALQDAASVASLLITTEAMIAELPKKDAPAMPGGMGGMGGMDMM.

ATP contacts are provided by residues 30 to 33, Lys51, 87 to 91, Gly415, and Asp495; these read TLGP and DGTTT.

It belongs to the chaperonin (HSP60) family. As to quaternary structure, forms a cylinder of 14 subunits composed of two heptameric rings stacked back-to-back. Interacts with the co-chaperonin GroES.

The protein localises to the cytoplasm. The catalysed reaction is ATP + H2O + a folded polypeptide = ADP + phosphate + an unfolded polypeptide.. Functionally, together with its co-chaperonin GroES, plays an essential role in assisting protein folding. The GroEL-GroES system forms a nano-cage that allows encapsulation of the non-native substrate proteins and provides a physical environment optimized to promote and accelerate protein folding. The protein is Chaperonin GroEL 1 of Rhizobium etli (strain ATCC 51251 / DSM 11541 / JCM 21823 / NBRC 15573 / CFN 42).